A 194-amino-acid chain; its full sequence is Der GTPase-activating protein YihI (194 aa).

The disordered stretch occupies residues 1–87 (MSRQKKSRNI…RDPRLGSRKK (87 aa)). Positions 37–48 (TRYELDAKARED) are enriched in basic and acidic residues.

This sequence belongs to the YihI family. In terms of assembly, interacts with Der.

Its function is as follows. A GTPase-activating protein (GAP) that modifies Der/EngA GTPase function. May play a role in ribosome biogenesis. The polypeptide is Der GTPase-activating protein YihI (Mannheimia succiniciproducens (strain KCTC 0769BP / MBEL55E)).